We begin with the raw amino-acid sequence, 424 residues long: S-inosyl-L-homocysteine hydrolase (424 aa).

Residues Asp-130 and Glu-155 each contribute to the substrate site. 156–158 contributes to the NAD(+) binding site; the sequence is TTT. Lys-185 and Asp-189 together coordinate substrate. NAD(+) contacts are provided by residues Asn-190, 219–224, Glu-242, Asn-277, 298–300, and Asn-346; these read GYGWCG and AGH.

It belongs to the adenosylhomocysteinase family. The cofactor is NAD(+).

It is found in the cytoplasm. The enzyme catalyses S-inosyl-L-homocysteine + H2O = L-homocysteine + inosine. The protein operates within amino-acid biosynthesis; S-adenosyl-L-methionine biosynthesis. Its function is as follows. Catalyzes the hydrolysis of S-inosyl-L-homocysteine (SIH) to L-homocysteine (Hcy) and inosine. Likely functions in a S-adenosyl-L-methionine (SAM) recycling pathway from S-adenosyl-L-homocysteine (SAH) produced from SAM-dependent methylation reactions. Can also catalyze the reverse reaction in vitro, i.e. the synthesis of SIH from Hcy and inosine. The chain is S-inosyl-L-homocysteine hydrolase from Methanopyrus kandleri (strain AV19 / DSM 6324 / JCM 9639 / NBRC 100938).